Here is a 322-residue protein sequence, read N- to C-terminus: Transaldolase (322 aa).

The active-site Schiff-base intermediate with substrate is lysine 136.

It belongs to the transaldolase family. Type 1 subfamily. As to quaternary structure, homodimer.

It is found in the cytoplasm. It carries out the reaction D-sedoheptulose 7-phosphate + D-glyceraldehyde 3-phosphate = D-erythrose 4-phosphate + beta-D-fructose 6-phosphate. It functions in the pathway carbohydrate degradation; pentose phosphate pathway; D-glyceraldehyde 3-phosphate and beta-D-fructose 6-phosphate from D-ribose 5-phosphate and D-xylulose 5-phosphate (non-oxidative stage): step 2/3. Functionally, transaldolase is important for the balance of metabolites in the pentose-phosphate pathway. The chain is Transaldolase from Xanthomonas oryzae pv. oryzae (strain MAFF 311018).